The sequence spans 340 residues: Nuclear transcription factor Y subunit A-3 (340 aa).

A disordered region spans residues 43–116; that stretch reads SLSLKVDSRP…KGFASNPKQG (74 aa). Positions 60-77 are enriched in low complexity; the sequence is QISFQDQDSSSTQSTGQS. A compositionally biased stretch (polar residues) spans 78-103; that stretch reads YTEVASSGDDNPSRQISFSAKSGSEI. Residues 182–205 carry the Subunit association domain (SAD) motif; sequence FVNAKQYHAIMRRRQQRAKLEAQN. The NFYA/HAP2-type DNA-binding region spans 212 to 237; it reads KPYLHESRHVHALKRPRGSGGRFLNT.

Belongs to the NFYA/HAP2 subunit family. In terms of assembly, heterotrimeric transcription factor composed of three components, NF-YA, NF-YB and NF-YC. NF-YB and NF-YC must interact and dimerize for NF-YA association and DNA binding. In terms of tissue distribution, ubiquitous.

It localises to the nucleus. Its function is as follows. Stimulates the transcription of various genes by recognizing and binding to a CCAAT motif in promoters. The polypeptide is Nuclear transcription factor Y subunit A-3 (NFYA3) (Arabidopsis thaliana (Mouse-ear cress)).